Consider the following 415-residue polypeptide: Histidine--tRNA ligase (415 aa).

Belongs to the class-II aminoacyl-tRNA synthetase family. In terms of assembly, homodimer.

It is found in the cytoplasm. It carries out the reaction tRNA(His) + L-histidine + ATP = L-histidyl-tRNA(His) + AMP + diphosphate + H(+). The chain is Histidine--tRNA ligase from Clostridium botulinum (strain Langeland / NCTC 10281 / Type F).